The following is a 66-amino-acid chain: Large ribosomal subunit protein bL31 (66 aa).

Zn(2+)-binding residues include C16, C18, C36, and C39.

This sequence belongs to the bacterial ribosomal protein bL31 family. Type A subfamily. In terms of assembly, part of the 50S ribosomal subunit. Requires Zn(2+) as cofactor.

In terms of biological role, binds the 23S rRNA. In Nautilia profundicola (strain ATCC BAA-1463 / DSM 18972 / AmH), this protein is Large ribosomal subunit protein bL31.